A 108-amino-acid chain; its full sequence is ATP synthase peripheral stalk subunit F6, mitochondrial (108 aa).

The transit peptide at methionine 1–phenylalanine 32 directs the protein to the mitochondrion. 3 positions are modified to N6-acetyllysine: lysine 41, lysine 46, and lysine 79. N6-acetyllysine; alternate is present on residues lysine 84, lysine 94, and lysine 99. N6-succinyllysine; alternate is present on residues lysine 84, lysine 94, and lysine 99. N6-acetyllysine is present on lysine 105. Serine 108 is subject to Phosphoserine.

This sequence belongs to the eukaryotic ATPase subunit F6 family. As to quaternary structure, component of the ATP synthase complex composed at least of ATP5F1A/subunit alpha, ATP5F1B/subunit beta, ATP5MC1/subunit c (homooctomer), MT-ATP6/subunit a, MT-ATP8/subunit 8, ATP5ME/subunit e, ATP5MF/subunit f, ATP5MG/subunit g, ATP5MK/subunit k, ATP5MJ/subunit j, ATP5F1C/subunit gamma, ATP5F1D/subunit delta, ATP5F1E/subunit epsilon, ATP5PF/subunit F6, ATP5PB/subunit b, ATP5PD/subunit d, ATP5PO/subunit OSCP. ATP synthase complex consists of a soluble F(1) head domain (subunits alpha(3) and beta(3)) - the catalytic core - and a membrane F(0) domain - the membrane proton channel (subunits c, a, 8, e, f, g, k and j). These two domains are linked by a central stalk (subunits gamma, delta, and epsilon) rotating inside the F1 region and a stationary peripheral stalk (subunits F6, b, d, and OSCP).

The protein resides in the mitochondrion. The protein localises to the mitochondrion inner membrane. Its function is as follows. Subunit F6, of the mitochondrial membrane ATP synthase complex (F(1)F(0) ATP synthase or Complex V) that produces ATP from ADP in the presence of a proton gradient across the membrane which is generated by electron transport complexes of the respiratory chain. ATP synthase complex consist of a soluble F(1) head domain - the catalytic core - and a membrane F(1) domain - the membrane proton channel. These two domains are linked by a central stalk rotating inside the F(1) region and a stationary peripheral stalk. During catalysis, ATP synthesis in the catalytic domain of F(1) is coupled via a rotary mechanism of the central stalk subunits to proton translocation. In vivo, can only synthesize ATP although its ATP hydrolase activity can be activated artificially in vitro. Part of the complex F(0) domain. Part of the complex F(0) domain and the peripheric stalk, which acts as a stator to hold the catalytic alpha(3)beta(3) subcomplex and subunit a/ATP6 static relative to the rotary elements. The chain is ATP synthase peripheral stalk subunit F6, mitochondrial from Mus musculus (Mouse).